We begin with the raw amino-acid sequence, 251 residues long: Triosephosphate isomerase (251 aa).

A substrate-binding site is contributed by 9–11 (NWK). Catalysis depends on histidine 95, which acts as the Electrophile. Glutamate 167 (proton acceptor) is an active-site residue. Substrate contacts are provided by residues glycine 173, serine 212, and 233 to 234 (GG).

Belongs to the triosephosphate isomerase family. In terms of assembly, homodimer.

It localises to the cytoplasm. It carries out the reaction D-glyceraldehyde 3-phosphate = dihydroxyacetone phosphate. It participates in carbohydrate biosynthesis; gluconeogenesis. The protein operates within carbohydrate degradation; glycolysis; D-glyceraldehyde 3-phosphate from glycerone phosphate: step 1/1. In terms of biological role, involved in the gluconeogenesis. Catalyzes stereospecifically the conversion of dihydroxyacetone phosphate (DHAP) to D-glyceraldehyde-3-phosphate (G3P). The sequence is that of Triosephosphate isomerase from Pseudomonas syringae pv. syringae (strain B728a).